Consider the following 535-residue polypeptide: Sodium channel protein Nach (535 aa).

The Cytoplasmic portion of the chain corresponds to 1-49; the sequence is MGHQEELKPEQVDLKVTPFVGYLRRTWSDFCATSSIHGLKYTRDEDTNK. A helical membrane pass occupies residues 50-70; that stretch reads IVHLVWLLISVVMFICAVVMA. The Extracellular portion of the chain corresponds to 71–471; sequence RTFYMDYRSS…LVSNLGSAFS (401 aa). 3 N-linked (GlcNAc...) asparagine glycosylation sites follow: asparagine 165, asparagine 239, and asparagine 367. A helical membrane pass occupies residues 472–492; the sequence is LFVGMSMLSVVEIIYYFSVIL. The Cytoplasmic segment spans residues 493–535; that stretch reads RKNYKLECETRSQMLHKKPKFAWPKANDTHSKEQKSVFIIHKS.

This sequence belongs to the amiloride-sensitive sodium channel (TC 1.A.6) family. As to expression, embryonic and larval tracheal system; dorsal trunk (but not at fusion with transverse connective), several branches and terminal cells. Also expressed in adult tracheal system; dorsal trunk, but not at the spiracles.

It is found in the membrane. Part of a complex that plays a role in tracheal liquid clearance. Probable role in sodium transport. This chain is Sodium channel protein Nach (Nach), found in Drosophila melanogaster (Fruit fly).